The chain runs to 79 residues: Acyl carrier protein (79 aa).

A Carrier domain is found at 4 to 79 (AEIKDKVYDI…QAIDYIVNKK (76 aa)). S39 is subject to O-(pantetheine 4'-phosphoryl)serine.

The protein belongs to the acyl carrier protein (ACP) family. Post-translationally, 4'-phosphopantetheine is transferred from CoA to a specific serine of apo-ACP by AcpS. This modification is essential for activity because fatty acids are bound in thioester linkage to the sulfhydryl of the prosthetic group.

The protein localises to the cytoplasm. It participates in lipid metabolism; fatty acid biosynthesis. In terms of biological role, carrier of the growing fatty acid chain in fatty acid biosynthesis. This is Acyl carrier protein from Chlorobaculum parvum (strain DSM 263 / NCIMB 8327) (Chlorobium vibrioforme subsp. thiosulfatophilum).